A 374-amino-acid polypeptide reads, in one-letter code: MSNVTVSAFTVDKSISEEHVLPSSFIPGSGNIFPKFTSAIPKTAWELWYFDGISKDDKSSIVIGVTRNAEGLKHGGFKVQVFVIWADERTWHRDLFFPESVVSINESGVTDGIWKDATSNSSISFSCAGDLSKASLVFDVPGVVQGDMHLEALPGDTGLDTDARLGPSVYYVRPIGRASVKAQLSLYSSDATAAEQFSLGTSANGGMDRVWSPLSWPQVMTESYYLRTQVGPYAMQIMRIFPPAGSEDQPSTMARLYREGQLVCVAQHVVTREDALMTHDSLILSKQDNSDSEDVVTGGYRDKNTGYTVEFVEKGNEGQRWKFQVRHERIIWNTPTSRPGPDATGNTGFVEVLCGGTIGESYEGVGTGGQCELS.

The tract at residues 1 to 216 (MSNVTVSAFT…MDRVWSPLSW (216 aa)) is beta-sandwich motif. The tract at residues 216 to 374 (WPQVMTESYY…VGTGGQCELS (159 aa)) is beta-barrel motif.

The protein belongs to the Diels-Alderase family.

It catalyses the reaction (5S)-3-[(2E,6R,8E,10E,12E)-2,6-dimethyltetradeca-2,8,10,12-tetraenoyl]-5-(hydroxymethyl)pyrrolidine-2,4-dione = trichosetin. It functions in the pathway mycotoxin biosynthesis. Diels-Alderase; part of the gene cluster that mediates the biosynthesis of the HIV-1 integrase inhibitor equisetin and of fusarisetin A, both trans-fused decalin-containing tetramic acids showing also antimicrobial activity. The PKS module of fsa1 together with the enoylreductase fsa3 catalyze the formation of the polyketide unit which is then conjugated to L-serine by the condensation domain of the fsa1 NRPS module. Activity of the Dieckmann cyclase domain (RED) results in release of the Dieckmann product intermediate. Diels-Alderase fsa2 is involved in endo-selective Diels-Alder cycloaddition to form the decalin ring, leading to the production of N-desmethylequisetin also called trichosetin. Subsequent N-methylation is carried out by fsa4 to give equisetin. The enzymatic gene responsible for the conversion of equisetin to fusarisetin A has not been identified yet and is probably located outside of the fsa cluster. The sequence is that of Diels-Alderase fsa2 from Fusarium sp. (strain FN080326).